Here is a 118-residue protein sequence, read N- to C-terminus: Iron-sulfur cluster insertion protein ErpA (118 aa).

Residues C46, C110, and C112 each contribute to the iron-sulfur cluster site.

It belongs to the HesB/IscA family. Homodimer. The cofactor is iron-sulfur cluster.

Required for insertion of 4Fe-4S clusters for at least IspG. This Psychromonas ingrahamii (strain DSM 17664 / CCUG 51855 / 37) protein is Iron-sulfur cluster insertion protein ErpA.